The following is a 376-amino-acid chain: Protein RecA (376 aa).

ATP is bound at residue 78–85 (GPESSGKT). Residues 355–376 (PVELVPNVDFDDEADTEADAED) are disordered. Residues 363-376 (DFDDEADTEADAED) are compositionally biased toward acidic residues.

This sequence belongs to the RecA family.

The protein resides in the cytoplasm. Can catalyze the hydrolysis of ATP in the presence of single-stranded DNA, the ATP-dependent uptake of single-stranded DNA by duplex DNA, and the ATP-dependent hybridization of homologous single-stranded DNAs. It interacts with LexA causing its activation and leading to its autocatalytic cleavage. The protein is Protein RecA of Corynebacterium glutamicum (strain R).